We begin with the raw amino-acid sequence, 357 residues long: tRNA/tmRNA (uracil-C(5))-methyltransferase (357 aa).

S-adenosyl-L-methionine is bound by residues Gln-180, Tyr-209, Asn-214, Glu-230, and Asp-290. Catalysis depends on Cys-315, which acts as the Nucleophile. The Proton acceptor role is filled by Glu-349.

This sequence belongs to the class I-like SAM-binding methyltransferase superfamily. RNA M5U methyltransferase family. TrmA subfamily.

The catalysed reaction is uridine(54) in tRNA + S-adenosyl-L-methionine = 5-methyluridine(54) in tRNA + S-adenosyl-L-homocysteine + H(+). It catalyses the reaction uridine(341) in tmRNA + S-adenosyl-L-methionine = 5-methyluridine(341) in tmRNA + S-adenosyl-L-homocysteine + H(+). Its function is as follows. Dual-specificity methyltransferase that catalyzes the formation of 5-methyluridine at position 54 (m5U54) in all tRNAs, and that of position 341 (m5U341) in tmRNA (transfer-mRNA). In Campylobacter jejuni subsp. jejuni serotype O:23/36 (strain 81-176), this protein is tRNA/tmRNA (uracil-C(5))-methyltransferase.